We begin with the raw amino-acid sequence, 235 residues long: Cytidylate kinase (235 aa).

An ATP-binding site is contributed by 16-24 (GPAASGKST).

Belongs to the cytidylate kinase family. Type 1 subfamily.

Its subcellular location is the cytoplasm. The enzyme catalyses CMP + ATP = CDP + ADP. It carries out the reaction dCMP + ATP = dCDP + ADP. The sequence is that of Cytidylate kinase from Chloroherpeton thalassium (strain ATCC 35110 / GB-78).